The primary structure comprises 137 residues: Ribonuclease VapC51 (137 aa).

The PINc domain maps to Y5–A120. Mg(2+) contacts are provided by D8 and D95.

The protein belongs to the PINc/VapC protein family. The cofactor is Mg(2+).

In terms of biological role, toxic component of a type II toxin-antitoxin (TA) system. An RNase. Its cognate antitoxin is VapB51. In Mycobacterium tuberculosis (strain ATCC 25618 / H37Rv), this protein is Ribonuclease VapC51.